The sequence spans 255 residues: Indole-3-glycerol phosphate synthase (255 aa).

The protein belongs to the TrpC family.

It carries out the reaction 1-(2-carboxyphenylamino)-1-deoxy-D-ribulose 5-phosphate + H(+) = (1S,2R)-1-C-(indol-3-yl)glycerol 3-phosphate + CO2 + H2O. The protein operates within amino-acid biosynthesis; L-tryptophan biosynthesis; L-tryptophan from chorismate: step 4/5. The protein is Indole-3-glycerol phosphate synthase of Streptococcus pneumoniae (strain Hungary19A-6).